Consider the following 216-residue polypeptide: Probable nicotinate-nucleotide adenylyltransferase (216 aa).

Belongs to the NadD family.

The catalysed reaction is nicotinate beta-D-ribonucleotide + ATP + H(+) = deamido-NAD(+) + diphosphate. Its pathway is cofactor biosynthesis; NAD(+) biosynthesis; deamido-NAD(+) from nicotinate D-ribonucleotide: step 1/1. In terms of biological role, catalyzes the reversible adenylation of nicotinate mononucleotide (NaMN) to nicotinic acid adenine dinucleotide (NaAD). This is Probable nicotinate-nucleotide adenylyltransferase from Geobacter sulfurreducens (strain ATCC 51573 / DSM 12127 / PCA).